A 466-amino-acid chain; its full sequence is Myocardial zonula adherens protein (466 aa).

Over residues 1-10 (MLRSTSTVTL) the composition is skewed to polar residues. A signal peptide spans 1–20 (MLRSTSTVTLLSGGAARTPG). Residues 1-23 (MLRSTSTVTLLSGGAARTPGAPS) form a disordered region. Coiled coils occupy residues 96–142 (QLKE…SHAQ) and 174–418 (LQKT…TQAK). A Required for DYNLL1-binding motif is present at residues 424 to 425 (RE).

This sequence belongs to the MYZAP family. As to quaternary structure, interacts with DSP, MPRIP and TJP1/ZO1. Interaction with MPRIP inhibits the activation of transcription factor SRF. Interacts with GRIN1. Interacts with DYNLL1. In terms of tissue distribution, detected in heart, liver, skeletal muscle, placenta, small intestine, lung, prostate and testis. Expressed in arrector pili muscle (at protein level).

Its subcellular location is the cytoplasm. It localises to the cytoskeleton. The protein localises to the cell membrane. It is found in the myofibril. The protein resides in the sarcomere. Its subcellular location is the i band. It localises to the z line. The protein localises to the cell junction. Plays a role in cellular signaling via Rho-related GTP-binding proteins and subsequent activation of transcription factor SRF. Targets TJP1 to cell junctions. In cortical neurons, may play a role in glutaminergic signal transduction through interaction with the NMDA receptor subunit GRIN1. The chain is Myocardial zonula adherens protein (MYZAP) from Homo sapiens (Human).